The chain runs to 93 residues: Small ribosomal subunit protein uS19 (93 aa).

The protein belongs to the universal ribosomal protein uS19 family.

In terms of biological role, protein S19 forms a complex with S13 that binds strongly to the 16S ribosomal RNA. In Paenarthrobacter aurescens (strain TC1), this protein is Small ribosomal subunit protein uS19.